Here is a 404-residue protein sequence, read N- to C-terminus: MAERFDRIWHNARLATLREGQPGLGVIEQGVVAARDGRIAFAGPRSDFAADGDAPERIDCAGRWITPGLVDCHTHLVYGGDRAHEFELRLAGASYEEIARAGGGIVSTVAATRAADENELVTGALPRLDALLAEGVTTIEIKSGYGLETATELRQLSAARALGVRRAVSVRTSFLGAHALPVEADGDKERYIDRVCDEMLPAVAQSGLADAVDAFMENIAFSAAQTSRVFAAAKALGLPVKLHADQLSNLGGAALAAEFGALSADHLEHTDEAGAAAMARAETVAVLLPGAFYFIRETQKPPVELFRKHGVKLALATDCNPGSSPLTSLLLTMNMAATLFRMTVDECLAGVTREGARALGVLAETGTLDAGKWCDLAIWDINRPAELVYRMGFNPLHQRVWRGR.

The Fe(3+) site is built by H73 and H75. Zn(2+)-binding residues include H73 and H75. 3 residues coordinate 4-imidazolone-5-propanoate: R82, Y145, and H178. Residue Y145 coordinates N-formimidoyl-L-glutamate. H243 contributes to the Fe(3+) binding site. Residue H243 participates in Zn(2+) binding. Q246 provides a ligand contact to 4-imidazolone-5-propanoate. D318 provides a ligand contact to Fe(3+). D318 provides a ligand contact to Zn(2+). Positions 320 and 322 each coordinate N-formimidoyl-L-glutamate. S323 is a 4-imidazolone-5-propanoate binding site.

The protein belongs to the metallo-dependent hydrolases superfamily. HutI family. The cofactor is Zn(2+). Requires Fe(3+) as cofactor.

It localises to the cytoplasm. The catalysed reaction is 4-imidazolone-5-propanoate + H2O = N-formimidoyl-L-glutamate. It functions in the pathway amino-acid degradation; L-histidine degradation into L-glutamate; N-formimidoyl-L-glutamate from L-histidine: step 3/3. Catalyzes the hydrolytic cleavage of the carbon-nitrogen bond in imidazolone-5-propanoate to yield N-formimidoyl-L-glutamate. It is the third step in the universal histidine degradation pathway. This is Imidazolonepropionase from Bradyrhizobium sp. (strain BTAi1 / ATCC BAA-1182).